Reading from the N-terminus, the 310-residue chain is HPr kinase/phosphorylase (310 aa).

Active-site residues include His138 and Lys159. 153–160 (GKSGVGKS) serves as a coordination point for ATP. Ser160 serves as a coordination point for Mg(2+). Asp177 functions as the Proton acceptor; for phosphorylation activity. Proton donor; for dephosphorylation activity in the catalytic mechanism. The segment at 201–210 (LEIRGLGIIN) is important for the catalytic mechanism of both phosphorylation and dephosphorylation. Glu202 contacts Mg(2+). Residue Arg243 is part of the active site. The tract at residues 264–269 (PVRPGR) is important for the catalytic mechanism of dephosphorylation.

The protein belongs to the HPrK/P family. Homohexamer. The cofactor is Mg(2+).

It carries out the reaction [HPr protein]-L-serine + ATP = [HPr protein]-O-phospho-L-serine + ADP + H(+). It catalyses the reaction [HPr protein]-O-phospho-L-serine + phosphate + H(+) = [HPr protein]-L-serine + diphosphate. Its function is as follows. Catalyzes the ATP- as well as the pyrophosphate-dependent phosphorylation of a specific serine residue in HPr, a phosphocarrier protein of the phosphoenolpyruvate-dependent sugar phosphotransferase system (PTS). HprK/P also catalyzes the pyrophosphate-producing, inorganic phosphate-dependent dephosphorylation (phosphorolysis) of seryl-phosphorylated HPr (P-Ser-HPr). The two antagonistic activities of HprK/P are regulated by several intracellular metabolites, which change their concentration in response to the absence or presence of rapidly metabolisable carbon sources (glucose, fructose, etc.) in the growth medium. Also phosphorylates/dephosphorylates the HPr-like catabolite repression protein crh on a specific serine residue. Therefore, by controlling the phosphorylation state of HPr and crh, HPrK/P is a sensor enzyme that plays a major role in the regulation of carbon metabolism and sugar transport: it mediates carbon catabolite repression (CCR), and regulates PTS-catalyzed carbohydrate uptake and inducer exclusion. The protein is HPr kinase/phosphorylase of Bacillus pumilus (strain SAFR-032).